A 629-amino-acid chain; its full sequence is tRNA uridine 5-carboxymethylaminomethyl modification enzyme MnmG (629 aa).

FAD contacts are provided by residues 15–20, Val127, and Ser182; that span reads GAGHAG. A disordered region spans residues 203 to 226; that stretch reads TPPRVKSSTIDYSKTEEQPGDDHP. Residues 215 to 226 show a composition bias toward basic and acidic residues; the sequence is SKTEEQPGDDHP. Position 274–288 (274–288) interacts with NAD(+); sequence GARYCPSIEDKIVRF. Residue Gln371 participates in FAD binding.

Belongs to the MnmG family. As to quaternary structure, homodimer. Heterotetramer of two MnmE and two MnmG subunits. FAD serves as cofactor.

The protein resides in the cytoplasm. Its function is as follows. NAD-binding protein involved in the addition of a carboxymethylaminomethyl (cmnm) group at the wobble position (U34) of certain tRNAs, forming tRNA-cmnm(5)s(2)U34. This is tRNA uridine 5-carboxymethylaminomethyl modification enzyme MnmG from Listeria innocua serovar 6a (strain ATCC BAA-680 / CLIP 11262).